A 279-amino-acid polypeptide reads, in one-letter code: uncharacterized protein (279 aa).

This is an uncharacterized protein from Acanthamoeba polyphaga mimivirus (APMV).